We begin with the raw amino-acid sequence, 356 residues long: Fructose-1,6-bisphosphatase class 1 (356 aa).

Positions 91, 113, 115, and 116 each coordinate Mg(2+). Substrate-binding positions include 116 to 119 and Asn-208; that span reads DGSS. Glu-280 lines the Mg(2+) pocket.

The protein belongs to the FBPase class 1 family. Homotetramer. It depends on Mg(2+) as a cofactor.

The protein resides in the cytoplasm. It carries out the reaction beta-D-fructose 1,6-bisphosphate + H2O = beta-D-fructose 6-phosphate + phosphate. Its pathway is carbohydrate biosynthesis; gluconeogenesis. The chain is Fructose-1,6-bisphosphatase class 1 from Methylacidiphilum infernorum (isolate V4) (Methylokorus infernorum (strain V4)).